The chain runs to 448 residues: Cysteine--tRNA ligase (448 aa).

Residue cysteine 27 coordinates Zn(2+). The 'HIGH' region motif lies at 29-39 (PTVYNYIHVGN). 3 residues coordinate Zn(2+): cysteine 210, histidine 235, and glutamate 239. The 'KMSKS' region signature appears at 267–271 (KMSKS). Lysine 270 contacts ATP.

The protein belongs to the class-I aminoacyl-tRNA synthetase family. As to quaternary structure, monomer. Zn(2+) is required as a cofactor.

It is found in the cytoplasm. It carries out the reaction tRNA(Cys) + L-cysteine + ATP = L-cysteinyl-tRNA(Cys) + AMP + diphosphate. The polypeptide is Cysteine--tRNA ligase (Lactococcus lactis subsp. cremoris (strain SK11)).